The following is a 236-amino-acid chain: Baculoviral IAP repeat-containing protein 8 (236 aa).

A BIR repeat occupies Trp7–Leu70. Zn(2+)-binding residues include Cys39, Cys42, His59, and Cys66. An RING-type zinc finger spans residues Cys189–Asn224.

The protein belongs to the IAP family. Binds to caspase-9.

It is found in the cytoplasm. In terms of biological role, protects against apoptosis mediated by BAX. In Gorilla gorilla gorilla (Western lowland gorilla), this protein is Baculoviral IAP repeat-containing protein 8 (BIRC8).